The following is a 1088-amino-acid chain: RNA-directed RNA polymerase (1088 aa).

One can recognise a RdRp catalytic domain in the interval 501-687 (LSYGDVTRFL…AKRYIAGGKI (187 aa)).

This sequence belongs to the reoviridae RNA-directed RNA polymerase family. In terms of assembly, interacts with VP3 (Potential). Interacts with VP2; this interaction activates VP1. Interacts with NSP5; this interaction is probably necessary for the formation of functional virus factories. Interacts with NSP2; this interaction is weak. The cofactor is Mg(2+).

The protein localises to the virion. It carries out the reaction RNA(n) + a ribonucleoside 5'-triphosphate = RNA(n+1) + diphosphate. Functionally, RNA-directed RNA polymerase that is involved in both transcription and genome replication. Together with VP3 capping enzyme, forms an enzyme complex positioned near the channels situated at each of the five-fold vertices of the core. Following infection, the outermost layer of the virus is lost, leaving a double-layered particle (DLP) made up of the core and VP6 shell. VP1 then catalyzes the transcription of fully conservative plus-strand genomic RNAs that are extruded through the DLP's channels into the cytoplasm where they function as mRNAs for translation of viral proteins. One copy of each of the viral (+)RNAs is also recruited during core assembly, together with newly synthesized polymerase complexes and VP2. The polymerase of these novo-formed particles catalyzes the synthesis of complementary minus-strands leading to dsRNA formation. To do so, the polymerase specifically recognizes and binds 4 bases 5'-UGUG-3' in the conserved 3'-sequence of plus-strand RNA templates. VP2 presumably activates the autoinhibited VP1-RNA complex to coordinate packaging and genome replication. Once dsRNA synthesis is complete, the polymerase switches to the transcriptional mode, thus providing secondary transcription. This is RNA-directed RNA polymerase from Rotavirus A (strain RVA/Pig/United States/Gottfried/1983/G4P2B[6]) (RV-A).